We begin with the raw amino-acid sequence, 342 residues long: Nicotinate-nucleotide--dimethylbenzimidazole phosphoribosyltransferase (342 aa).

Glutamate 311 acts as the Proton acceptor in catalysis.

Belongs to the CobT family.

The enzyme catalyses 5,6-dimethylbenzimidazole + nicotinate beta-D-ribonucleotide = alpha-ribazole 5'-phosphate + nicotinate + H(+). It functions in the pathway nucleoside biosynthesis; alpha-ribazole biosynthesis; alpha-ribazole from 5,6-dimethylbenzimidazole: step 1/2. Its function is as follows. Catalyzes the synthesis of alpha-ribazole-5'-phosphate from nicotinate mononucleotide (NAMN) and 5,6-dimethylbenzimidazole (DMB). This is Nicotinate-nucleotide--dimethylbenzimidazole phosphoribosyltransferase from Shewanella piezotolerans (strain WP3 / JCM 13877).